The sequence spans 166 residues: Putative membrane protein 162 (166 aa).

A topological domain (intravirion) is located at residue methionine 1. Residues 2-22 form a helical membrane-spanning segment; it reads YYPAVQVLIGIILVDNFNTEF. Residues 23–166 lie on the Virion surface side of the membrane; sequence LSSEKKNCKT…TIMGIARNIL (144 aa).

It belongs to the asfivirus envelope protein p22 family.

It is found in the virion membrane. The protein localises to the host cell membrane. The polypeptide is Putative membrane protein 162 (African swine fever virus (isolate Tick/Malawi/Lil 20-1/1983) (ASFV)).